Here is a 374-residue protein sequence, read N- to C-terminus: Tomoregulin-2 (374 aa).

The first 40 residues, 1–40, serve as a signal peptide directing secretion; it reads MVLWESPRQCSSWTLCEGFCWLLLLPVMLLIVARPVKLAA. Over 41 to 320 the chain is Extracellular; the sequence is FPTSLSDCQT…VPGPVRFQYV (280 aa). Kazal-like domains follow at residues 90 to 137 and 181 to 229; these read VCQF…SCAT and VCNI…RCQD. 6 disulfide bridges follow: cysteine 91–cysteine 121, cysteine 95–cysteine 114, cysteine 103–cysteine 135, cysteine 182–cysteine 213, cysteine 186–cysteine 206, and cysteine 195–cysteine 227. N-linked (GlcNAc...) (complex) asparagine; atypical glycosylation occurs at asparagine 204. Asparagine 230 carries N-linked (GlcNAc...) asparagine glycosylation. The EGF-like domain occupies 261-301; that stretch reads HHIPCPEHYNGFCMHGKCEHSINMQEPSCRCDAGYTGQHCE. 3 disulfide bridges follow: cysteine 265-cysteine 278, cysteine 273-cysteine 289, and cysteine 291-cysteine 300. The segment at 303 to 320 is required for shedding; it reads KDYSVLYVVPGPVRFQYV. The helical transmembrane segment at 321-341 threads the bilayer; sequence LIAAVIGTIQIAVICVVVLCI. Topologically, residues 342–374 are cytoplasmic; the sequence is TRKCPRSNRIHRQKQNTGHYSSDNTTRASTRLI. The segment at 353–374 is disordered; that stretch reads RQKQNTGHYSSDNTTRASTRLI. Polar residues predominate over residues 356-374; sequence QNTGHYSSDNTTRASTRLI.

This sequence belongs to the tomoregulin family. Post-translationally, O-glycosylated; contains chondroitin sulfate glycosaminoglycans. A soluble form (TMEFF2-ECD) is produced by proteolytic shedding. This shedding can be induced by phorbol ester or pro-inflammatory cytokines such as TNFalpha, and is mediated by ADAM17. As to expression, highly expressed in adult and fetal brain, spinal cord and prostate. Expressed in all brain regions except the pituitary gland, with highest levels in amygdala and corpus callosum. Expressed in the pericryptal myofibroblasts and other stromal cells of normal colonic mucosa. Expressed in prostate carcinoma. Down-regulated in colorectal cancer. Present in Alzheimer disease plaques (at protein level). Isoform 3 is expressed weakly in testis and at high levels in normal and cancerous prostate.

It is found in the membrane. The protein localises to the secreted. May be a survival factor for hippocampal and mesencephalic neurons. The shedded form up-regulates cancer cell proliferation, probably by promoting ERK1/2 phosphorylation. The chain is Tomoregulin-2 (TMEFF2) from Homo sapiens (Human).